We begin with the raw amino-acid sequence, 377 residues long: Nitric oxide reductase FlRd-NAD(+) reductase (377 aa).

Belongs to the FAD-dependent oxidoreductase family. FAD serves as cofactor.

The protein resides in the cytoplasm. It carries out the reaction 2 reduced [nitric oxide reductase rubredoxin domain] + NAD(+) + H(+) = 2 oxidized [nitric oxide reductase rubredoxin domain] + NADH. It participates in nitrogen metabolism; nitric oxide reduction. Functionally, one of at least two accessory proteins for anaerobic nitric oxide (NO) reductase. Reduces the rubredoxin moiety of NO reductase. This is Nitric oxide reductase FlRd-NAD(+) reductase from Escherichia coli O6:H1 (strain CFT073 / ATCC 700928 / UPEC).